We begin with the raw amino-acid sequence, 389 residues long: MKILWITSVYPSSMKPGEGVFHETQVQELQKLGLDITVICPRPFHSAPVRMLKKTYRKKDVRPEYEIRKGIPVYRPFYRAVPGQLKWAQPHRRIASAVLKTMKQRDLYPDLIHAHFAMPSGGAAAVVSESAQIPYVLTLHGSDVNVYPHYSKGAFKAFKRAVGSASVVLAVSHKLQEEAKKLSGFDSSVLPIGIQLSRFQGNEETKEEIRKRLGLPLDQRLAVYVGRLVREKGIFELSEAIESLQDSPKAVFVGDGPAKSTLTQKGHIVTGQVPNHQVRDYLLAADLFVLPSYSEGMPTVVIEALALRVPVICTDVGGVSSLFGKHQHLLIKPKSAQALAEAITRYEHEQIWKPEVADDLYETVQAQFDAGKNAKALHHQYQTVTKTSV.

Belongs to the glycosyltransferase group 1 family. Glycosyltransferase 4 subfamily.

It participates in cell wall biogenesis; teichuronic acid biosynthesis. The chain is Putative teichuronic acid biosynthesis glycosyltransferase TuaC (tuaC) from Bacillus subtilis (strain 168).